The sequence spans 354 residues: Replication-associated protein (354 aa).

One can recognise a CRESS-DNA virus Rep endonuclease domain in the interval 11 to 114; sequence SHRSPNTFLT…PLALFERGTF (104 aa). Positions 18–21 match the RCR-1 motif; it reads FLTY. 2 residues coordinate a divalent metal cation: Glu-52 and His-62. The RCR-2 signature appears at 60 to 65; that stretch reads CLHALI. The For DNA cleavage activity role is filled by Tyr-100. Positions 100-103 match the RCR-3 motif; the sequence is YITK. Glu-104 contacts a divalent metal cation. The oligomerization stretch occupies residues 175–187; it reads SANKLFPDIQEEF. Residue 228–235 coordinates ATP; the sequence is GPTRTGKS. The segment at 251–269 is transactivation; that stretch reads VDWSSYNEDTIYNIVDDIP. Positions 291 to 302 match the Nuclear localization signal motif; the sequence is KYGKKKKVQMKS.

It belongs to the geminiviridae Rep protein family. Homooligomer. Rep binds to repeated DNA motifs (iterons). Forms the O-complex, which is a Rep-DNA complex involved in the initiation of RCR. Part of the C- and V-complexes which are RepA-Rep-DNA complexes involved in the c-sense and v-sense transcription. The cofactor is Mg(2+). Mn(2+) serves as cofactor.

The protein resides in the host nucleus. Functionally, essential for the replication of viral ssDNA. The closed circular ssDNA genome is first converted to a superhelical dsDNA. Rep binds a specific region at the genome origin of replication. It introduces an endonucleolytic nick within the conserved sequence 5'-TAATATTAC-3' in the intergenic region of the genome present in all geminiviruses, thereby initiating the rolling circle replication (RCR). Following cleavage, binds covalently to the 5'-phosphate of DNA as a tyrosyl ester. The cleavage gives rise to a free 3'-OH that serves as a primer for the cellular DNA polymerase. The polymerase synthesizes the (+) strand DNA by rolling circle mechanism. After one round of replication, a Rep-catalyzed nucleotidyl transfer reaction releases a circular single-stranded virus genome, thereby terminating the replication. Displays origin-specific DNA cleavage, nucleotidyl transferase, ATPase and helicase activities. Acts as an inhibitor of C-sense gene transcription. The polypeptide is Replication-associated protein (Maize streak virus genotype C (isolate Set) (MSV)).